We begin with the raw amino-acid sequence, 462 residues long: UDP-N-acetylmuramate--L-alanine ligase (462 aa).

117–123 serves as a coordination point for ATP; it reads GTHGKTT.

This sequence belongs to the MurCDEF family.

It localises to the cytoplasm. It carries out the reaction UDP-N-acetyl-alpha-D-muramate + L-alanine + ATP = UDP-N-acetyl-alpha-D-muramoyl-L-alanine + ADP + phosphate + H(+). Its pathway is cell wall biogenesis; peptidoglycan biosynthesis. In terms of biological role, cell wall formation. The sequence is that of UDP-N-acetylmuramate--L-alanine ligase from Streptomyces coelicolor (strain ATCC BAA-471 / A3(2) / M145).